A 615-amino-acid polypeptide reads, in one-letter code: Deoxyribodipyrimidine photo-lyase (615 aa).

Positions 1-53 (MAPSKRKASAPPQTSHVNGNPSADKKRKTTTDAPPTNPNTSSDPLRAPHPFYK) are disordered. Over residues 11 to 21 (PPQTSHVNGNP) the composition is skewed to polar residues. Low complexity predominate over residues 31 to 40 (TDAPPTNPNT). Positions 108–249 (QAVVHWFKMD…AADVVHDTCV (142 aa)) constitute a Photolyase/cryptochrome alpha/beta domain. An FAD-binding site is contributed by tyrosine 352. Arginine 356 provides a ligand contact to DNA. 364–368 (TSNLS) contributes to the FAD binding site. Interaction with DNA stretches follow at residues 407 to 414 (EVAWRDFY) and 474 to 475 (NR). Residue 505-507 (DGD) participates in FAD binding. Residue glutamine 537 coordinates DNA.

The protein belongs to the DNA photolyase class-1 family. In terms of assembly, monomer. It depends on FAD as a cofactor. (6R)-5,10-methylene-5,6,7,8-tetrahydrofolate serves as cofactor.

It carries out the reaction cyclobutadipyrimidine (in DNA) = 2 pyrimidine residues (in DNA).. Its function is as follows. Involved in repair of UV radiation-induced DNA damage. Catalyzes the light-dependent monomerization (300-600 nm) of cyclobutyl pyrimidine dimers (in cis-syn configuration), which are formed between adjacent bases on the same DNA strand upon exposure to ultraviolet radiation. The polypeptide is Deoxyribodipyrimidine photo-lyase (phr) (Neurospora crassa (strain ATCC 24698 / 74-OR23-1A / CBS 708.71 / DSM 1257 / FGSC 987)).